Consider the following 1446-residue polypeptide: MAAILLLLLGFSWSLAVESALAPKESESSASAMLGAGTGAAATVSLSGDYSSLLSNVPAASPVPANPSQPSGPANQCSWSYNGTSSVHCALRLIERQPGLDLQGADGSSQLTIQCSELYLFESTLPVAVFARLQTLEALRLDSCKLLQLPNNAFEGLATLKSLRLSTHNSEWGPTRTLELFPDSLGGLKQLTDLDLGDNNLRQLPSGFLCPVGNLQVLNLTRNRIRTAEQMGFADMNCGAGSGSAGSELQVLDASHNELRSISESWGISRLRRLQHLNLAYNNLSELSGEALAGLASLRIVNLSNNHLETLPEGLFAGSKELREIHLQQNELYELPKGLFHRLEQLLVVDLSGNQLTSNHVDNTTFAGLIRLIVLNLAHNALTRIDYRTFKELYFLQILNLRNNSIGHIEDNAFLPLYNLHTLNLAENRLHTLDDKLFNGLYVLSKLTLNNNLISVVEPAVFKNCSDLKELDLSSNQLNEVPRALQDLAMLRTLDLGENQIRTFDNQSFKNLHQLTGLRLIDNQIGNITVGMFQDLPRLSVLNLAKNRIQSIERGSFDKNFELEAIRLDRNFLADINGVFATLVSLLWLNLSENHLVWFDYAFIPSNLKWLDIHGNYIEALGNYYKLQEEIRVKTLDASHNRITEIGPMSIPNTIELLFINNNLIGNVQPNAFVDKANLARVDLYANQLSKLQLQQLRVAPVVAPKPLPEFYLGGNPFECDCTMDWLQRINNLTTRQHPRVMDMANIECVMPHARGAAVRPLSGLRPQDFLCRYESHCFALCHCCDFDACDCEMTCPSNCTCYHDQIWSTNVVDCGGQQTTELPRRVPMDSSVVYLDGNNFPVLKNHAFIGRKNLRALYVNGSQVAAIQNRTFASLASLQLLHLADNKLRTLHGYEFEQLSALRELYLQNNQLTTIENATLAPLAALELIRIDGNRLVTLPIWQMHATHFGTRLKSISLGRNQWSCRCQFLQALTSYVADNALIVQDAQDIYCMAASSGTGSAALEDSSSNSGSLEKRELDFNATGAACTDYYSGGSMLQHGIPESYIPLLAAALALLFLLVVIAMVFAFRESLRIWLFAHYGVRVFGPRCEESEKLYDAVLLHSAKDSEFVCQHLAAQLETGRPPLRVCLQHRDLAHDATHYQLLEATRVSRRVVILLTRNFLQTEWARCELRRSVHDALRGRPQKLVIIEEPEVAFEAESDIELLPYLKTSAVHRIRRSDRHFWEKLRYALPVDYPTFRGNNYTLELDHHNHERVKQPASPGLLYRQAPPPAYCGPADAVGIGAVPQVVPVNASVPAEQNYSTATTATPSPRPQRRGEQPGSGSGGNHHLHAQYYQHHGMRPPSEHIYSSIDSDYSTLDNEQHMLMMPGAPGGLAMEAAQRAQTWRPKREQLHLQQAQAGTLGSKASQAAHQQQQQQQQQQQQQPNPTAVSGQQQGPHVQAYLV.

Residues 1 to 16 form the signal peptide; that stretch reads MAAILLLLLGFSWSLA. The Extracellular portion of the chain corresponds to 17–1049; that stretch reads VESALAPKES…QHGIPESYIP (1033 aa). 23 LRR repeats span residues 133–156, 158–180, 188–211, 213–235, 246–270, 271–294, 295–318, 320–342, 344–368, 369–392, 393–416, 417–440, 442–464, 465–488, 489–511, 513–535, 536–559, 561–582, 584–605, 606–629, 631–652, 653–675, and 677–699; these read LQTL…AFEG, ATLK…TLEL, LKQL…FLCP, GNLQ…GFAD, GSEL…GISR, LRRL…ALAG, LASL…LFAG, KELR…LFHR, EQLL…TFAG, LIRL…TFKE, LYFL…AFLP, LYNL…LFNG, YVLS…VFKN, CSDL…LQDL, AMLR…SFKN, HQLT…MFQD, LPRL…SFDK, FELE…VFAT, VSLL…AFIP, SNLK…KLQE, IRVK…MSIP, NTIE…AFVD, and ANLA…QLRV. Positions 716-773 constitute an LRRCT domain; the sequence is NPFECDCTMDWLQRINNLTTRQHPRVMDMANIECVMPHARGAAVRPLSGLRPQDFLCR. 3 disulfide bridges follow: Cys722-Cys772, Cys796-Cys802, and Cys800-Cys815. LRR repeat units follow at residues 828-851, 852-875, 876-899, 900-923, 925-947, and 951-979; these read PMDS…AFIG, RKNL…TFAS, LASL…EFEQ, LSAL…TLAP, AALE…QMHA, and GTRL…SYVA. An intrachain disulfide couples Cys966 to Cys993. Residues 1050-1070 traverse the membrane as a helical segment; sequence LLAAALALLFLLVVIAMVFAF. The Cytoplasmic portion of the chain corresponds to 1071 to 1446; the sequence is RESLRIWLFA…QGPHVQAYLV (376 aa). The TIR domain maps to 1096–1233; it reads KLYDAVLLHS…HFWEKLRYAL (138 aa). Disordered regions lie at residues 1301–1332 and 1388–1446; these read QNYS…NHHL and RPKR…AYLV. Polar residues predominate over residues 1395–1413; it reads HLQQAQAGTLGSKASQAAH. Over residues 1414–1426 the composition is skewed to low complexity; that stretch reads QQQQQQQQQQQQQ. Over residues 1427-1439 the composition is skewed to polar residues; it reads PNPTAVSGQQQGP.

It belongs to the Toll-like receptor family. Expressed in the fan-shaped body and the ellipsoid body, which are components of the locomotion center in the CNS (at protein level).

Its subcellular location is the cell membrane. Its function is as follows. Toll-related receptor which binds to the neurotrophins NT1 and spz5. Essential for antiviral autophagy, it detects and binds to the vesicular stomatitis virus (vsv) following infection. This role is likely to be independent of the canonical Toll, immune deficiency, and JAK-STAT signaling pathways. Functions in olfactory circuit assembly by promoting synaptic partner matching between olfactory receptor neurons (ORN) axons and projection neurons (PN) dendrites partners in the antennal lobe. Function in the Va1d ORNs is necessary and sufficient for correct targeting to their partner PN dendrites. Also involved in the targeting of other classes of ORN axons. Functions with Toll-6 to regulate motor axon targeting and neuronal survival in the central nervous system (CNS). May be an upstream component of the NF-kappa-B (rel) regulatory cascade. This is Toll-like receptor 7 from Drosophila melanogaster (Fruit fly).